Reading from the N-terminus, the 559-residue chain is Glypican-1 (559 aa).

Positions 1–23 (MELRARGWWLLYAAAVLVACARG) are cleaved as a signal peptide. 7 disulfide bridges follow: cysteine 32–cysteine 68, cysteine 62–cysteine 256, cysteine 69–cysteine 259, cysteine 191–cysteine 343, cysteine 246–cysteine 279, cysteine 268–cysteine 415, and cysteine 272–cysteine 401. Asparagine 79 and asparagine 116 each carry an N-linked (GlcNAc...) asparagine glycan. The segment at 478–539 (FQDASDDGSG…SAAAPTPPQA (62 aa)) is disordered. O-linked (Xyl...) (heparan sulfate) serine glycosylation is found at serine 486, serine 488, and serine 490. Serine 530 carries the GPI-anchor amidated serine lipid modification. A propeptide spans 531–559 (AAAPTPPQASPLLLLGLALALPAVAPRGR) (removed in mature form).

The protein belongs to the glypican family. S-nitrosylated in a Cu(2+)-dependent manner. Nitric acid (NO) is released from the nitrosylated cysteines by ascorbate or by some other reducing agent, in a Cu(2+) or Zn(2+) dependent manner. This free nitric oxide is then capable of cleaving the heparan sulfate side chains. Post-translationally, N- and O-glycosylated. N-glycosylation is mainly of the complex type containing sialic acid. O-glycosylated with heparan sulfate. The heparan sulfate chains can be cleaved either by the action of heparanase or, degraded by a deaminative process that uses nitric oxide (NO) released from the S-nitrosylated cysteines. This process is triggered by ascorbate, or by some other reducing agent, in a Cu(2+)- or Zn(2+) dependent manner. Cu(2+) ions are provided by ceruloproteins such as APP, PRNP or CP which associate with GCP1 in intracellular compartments or lipid rafts. In terms of processing, shed from the cell surface probably by further cleavage.

The protein resides in the cell membrane. The protein localises to the endosome. Its subcellular location is the secreted. It is found in the extracellular space. Functionally, cell surface proteoglycan that bears heparan sulfate. Binds, via the heparan sulfate side chains, alpha-4 (V) collagen and participates in Schwann cell myelination. May act as a catalyst in increasing the rate of conversion of prion protein PRPN (C) to PRNP (Sc) via associating (via the heparan sulfate side chains) with both forms of PRPN, targeting them to lipid rafts and facilitating their interaction. Required for proper skeletal muscle differentiation by sequestering FGF2 in lipid rafts preventing its binding to receptors (FGFRs) and inhibiting the FGF-mediated signaling. The chain is Glypican-1 (GPC1) from Bos taurus (Bovine).